The following is a 180-amino-acid chain: ADP-ribosylation factor 4 (180 aa).

The N-myristoyl glycine moiety is linked to residue G2. Residues 24 to 31 (GLDAAGKT), 67 to 71 (DVGGQ), and 126 to 129 (NKQD) contribute to the GTP site. S147 carries the phosphoserine modification.

This sequence belongs to the small GTPase superfamily. Arf family. As to quaternary structure, forms a complex containing RAB11A, ASAP1, RAB3IP, RAP11FIP3 and ARF4; the complex promotes preciliary trafficking; the complex binds to RHO in photoreceptor cells and promotes RHO ciliary transport.

The protein resides in the golgi apparatus. It is found in the membrane. In terms of biological role, GTP-binding protein that functions as an allosteric activator of the cholera toxin catalytic subunit, an ADP-ribosyltransferase. Involved in protein trafficking; may modulate vesicle budding and uncoating within the Golgi apparatus. Part of the ciliary targeting complex containing Rab11, ASAP1, Rabin8/RAB3IP, RAB11FIP3 and ARF4, which direct preciliary vesicle trafficking to mother centriole and ciliogenesis initiation. This chain is ADP-ribosylation factor 4 (Arf4), found in Mus musculus (Mouse).